The sequence spans 149 residues: Arginine repressor (149 aa).

The protein belongs to the ArgR family.

Its subcellular location is the cytoplasm. It participates in amino-acid biosynthesis; L-arginine biosynthesis [regulation]. In terms of biological role, regulates arginine biosynthesis genes. In Geobacillus sp. (strain WCH70), this protein is Arginine repressor.